The primary structure comprises 346 residues: Calcium uniporter protein, mitochondrial (346 aa).

The Mitochondrial matrix portion of the chain corresponds to 1 to 195 (MTKGKLLTTP…ECDKAAHRGA (195 aa)). Residues 55-120 (ELPPPDPQDS…GEGKDEGEFV (66 aa)) form a disordered region. 2 stretches are compositionally biased toward basic and acidic residues: residues 76-91 (MEAKDDEIKPRKKADT) and 109-119 (REGEGKDEGEF). The chain crosses the membrane as a helical span at residues 196 to 216 (QRIALAGCGGLIGYWYIVYRL). The Mitochondrial intermembrane segment spans residues 217–226 (TFETDLGWDV). The Selectivity filter signature appears at 224 to 232 (WDVMEPVTY). A helical transmembrane segment spans residues 227–248 (MEPVTYLVGLSTLIGGYMWFLW). Glu-228 provides a ligand contact to Ca(2+). Topologically, residues 249-346 (HNREVSYRSA…KEGEEDDEDD (98 aa)) are mitochondrial matrix. The disordered stretch occupies residues 306-346 (WNETQDEGGDEKVTKALRDERKNNNGTKNKSKEGEEDDEDD). Residues 315–328 (DEKVTKALRDERKN) show a composition bias toward basic and acidic residues.

This sequence belongs to the MCU (TC 1.A.77) family. Homotetramer, assembles in a dimer or dimers configuration with two interfaces.

The protein localises to the mitochondrion inner membrane. It carries out the reaction Ca(2+)(in) = Ca(2+)(out). In terms of biological role, highly selective calcium channel localized to the inner mitochondrial membrane, which mediates calcium uptake into the mitochondrial matrix. Mitochondrial calcium homeostasis plays key roles in cellular physiology and regulates ATP production, cytoplasmic calcium signals and activation of cell death pathways. Sufficient to operate as a pore-forming channel without the need of calcium-sensor or auxiliary subunit. The sequence is that of Calcium uniporter protein, mitochondrial from Cyphellophora europaea (strain CBS 101466) (Phialophora europaea).